Consider the following 239-residue polypeptide: Phosphoribosylaminoimidazole-succinocarboxamide synthase (239 aa).

It belongs to the SAICAR synthetase family.

It catalyses the reaction 5-amino-1-(5-phospho-D-ribosyl)imidazole-4-carboxylate + L-aspartate + ATP = (2S)-2-[5-amino-1-(5-phospho-beta-D-ribosyl)imidazole-4-carboxamido]succinate + ADP + phosphate + 2 H(+). It participates in purine metabolism; IMP biosynthesis via de novo pathway; 5-amino-1-(5-phospho-D-ribosyl)imidazole-4-carboxamide from 5-amino-1-(5-phospho-D-ribosyl)imidazole-4-carboxylate: step 1/2. This chain is Phosphoribosylaminoimidazole-succinocarboxamide synthase, found in Bacillus cereus (strain 03BB102).